Consider the following 345-residue polypeptide: Nuclear distribution protein nudE-like 1 (345 aa).

Residues 27–190 (KQTFQEARDE…LAVRERQQEV (164 aa)) adopt a coiled-coil conformation. The segment at 56–166 (VQAEQRNRDL…LDEKESLLVS (111 aa)) is self-association. Residues 64–189 (DLQADNQRLK…ELAVRERQQE (126 aa)) form an interaction with KATNB1 region. Residues 114–133 (YVRELEQANDDLERAKRATI) are required for interaction with PAFAH1B1. The tract at residues 175–345 (RDLRQELAVR…SAPGMLPLSV (171 aa)) is interaction with CENPF. An interaction with YWHAE region spans residues 189–256 (EVTRKSAPSS…SARISALNIV (68 aa)). The interval 191–345 (TRKSAPSSPT…SAPGMLPLSV (155 aa)) is interaction with NEFL. The tract at residues 195–256 (APSSPTLDCE…SARISALNIV (62 aa)) is interaction with KATNA1. S215 is modified (phosphoserine). The tract at residues 217-240 (PATPVGKGTENSFPSPKAIPNGFG) is disordered. A Phosphothreonine; by CDK1 and MAPK1 modification is found at T219. An interaction with DISC1 region spans residues 227–278 (NSFPSPKAIPNGFGTSPLTPSARISALNIVGDLLRKVGALESKLAACRNFAK). The residue at position 231 (S231) is a Phosphoserine. S242 is modified (phosphoserine; by CDK1). T245 bears the Phosphothreonine; by CDK1 and MAPK1 mark. Residues 256–291 (VGDLLRKVGALESKLAACRNFAKDQASRKSYISGNV) are required for localization to the centrosome and interaction with dynein, dynactin, tubulin gamma, PCM1 and PCNT. C273 is lipidated: S-palmitoyl cysteine; by ZDHHC2, ZDHHC3 and ZDHHC7. The segment at 316-345 (AVNGFDPAPPPPGLGSSRPLSAPGMLPLSV) is disordered. Over residues 329–339 (LGSSRPLSAPG) the composition is skewed to low complexity. At S344 the chain carries Phosphoserine.

The protein belongs to the nudE family. As to quaternary structure, self-associates. Interacts with DISC1, dynein, dynactin, tubulin gamma, KATNA1, KATNB1, microtubules, PAFAH1B1, PCM1, PCNT, and YWHAE. Interacts directly with NEFL and indirectly with NEFH. Interacts (via C-terminus) with CENPF. Interacts with ZNF365. Interacts with PLEKHM1 (via N- and C-terminus). Interacts with GTP-bound RAB9A; the interaction may lead to RAB9A-dynein motor tethering. Post-translationally, phosphorylated in mitosis. Can be phosphorylated by CDK1, CDK5 and MAPK1. Phosphorylation by CDK5 promotes interaction with KATNA1 and YWHAE. Palmitoylation at Cys-273 reduces affinity for dynein. In terms of tissue distribution, expressed at low levels in heart, hypothalamus, liver, lung, spleen and stomach. Expressed at higher levels in testis and brain. Within the brain, expressed in cerebellum, cerebral stem, cortex and striatum.

Its subcellular location is the cytoplasm. The protein resides in the cytoskeleton. It is found in the microtubule organizing center. It localises to the centrosome. The protein localises to the chromosome. Its subcellular location is the centromere. The protein resides in the kinetochore. It is found in the spindle. Functionally, required for organization of the cellular microtubule array and microtubule anchoring at the centrosome. May regulate microtubule organization at least in part by targeting the microtubule severing protein KATNA1 to the centrosome. Also positively regulates the activity of the minus-end directed microtubule motor protein dynein. May enhance dynein-mediated microtubule sliding by targeting dynein to the microtubule plus ends. Required for several dynein- and microtubule-dependent processes such as the maintenance of Golgi integrity, the centripetal motion of secretory vesicles and the coupling of the nucleus and centrosome. Also required during brain development for the migration of newly formed neurons from the ventricular/subventricular zone toward the cortical plate. Plays a role, together with DISC1, in the regulation of neurite outgrowth. Required for mitosis in some cell types but appears to be dispensible for mitosis in cortical neuronal progenitors, which instead requires NDE1. Facilitates the polymerization of neurofilaments from the individual subunits NEFH and NEFL. Positively regulates lysosome peripheral distribution and ruffled border formation in osteoclasts. Plays a role, together with DISC1, in the regulation of neurite outgrowth. May act as a RAB9A/B effector that tethers RAB9-associated late endosomes to the dynein motor for their retrograde transport to the trans-Golgi network. In Oryctolagus cuniculus (Rabbit), this protein is Nuclear distribution protein nudE-like 1 (NDEL1).